The following is a 375-amino-acid chain: Ornithine transcarbamylase, chloroplastic (375 aa).

A chloroplast-targeting transit peptide spans 1–53; sequence MAAAMASHVSTARSPALSFSSSSSSFFPGTTLRRFSAVSLPSPALPRLRVSCQ. An N-acetylalanine modification is found at Ala-54. Residues 123–126, Arg-174, His-201, and Gln-204 each bind carbamoyl phosphate; that span reads SMRT. L-ornithine-binding residues include Asn-232, Asp-293, Ser-297, and Met-298. Cys-333 acts as the Proton acceptor in catalysis. Carbamoyl phosphate is bound by residues 333 to 334 and Arg-361; that span reads CL.

Belongs to the aspartate/ornithine carbamoyltransferase superfamily. OTCase family.

It localises to the plastid. The protein localises to the chloroplast. The enzyme catalyses carbamoyl phosphate + L-ornithine = L-citrulline + phosphate + H(+). This is Ornithine transcarbamylase, chloroplastic (OTC) from Arabidopsis thaliana (Mouse-ear cress).